We begin with the raw amino-acid sequence, 594 residues long: Transcriptional repressor p66-beta (594 aa).

Ser17 carries the phosphoserine modification. Glycyl lysine isopeptide (Lys-Gly) (interchain with G-Cter in SUMO2) cross-links involve residues Lys33 and Lys66. A disordered region spans residues 62–143 (ELPTKQDGSG…ASSPRSSSRM (82 aa)). A compositionally biased stretch (basic and acidic residues) spans 74 to 89 (GYEEKLNGNLRPHGDN). Residue Lys98 forms a Glycyl lysine isopeptide (Lys-Gly) (interchain with G-Cter in SUMO2) linkage. Basic and acidic residues predominate over residues 109–119 (SARRSEPDRGR). A Phosphothreonine modification is found at Thr121. Phosphoserine occurs at positions 123, 130, 135, and 136. The segment covering 130–140 (SDNEASSPRSS) has biased composition (low complexity). Residues 141–195 (SRMEERLKAANLEMFKGKGMEERQQLIKQLRDELRLEEARLVLLKKLRQSQLQKE) adopt a coiled-coil conformation. A Glycyl lysine isopeptide (Lys-Gly) (interchain with G-Cter in SUMO2) cross-link involves residue Lys148. A CR1; interaction with MBD2 and MBD3 region spans residues 166–191 (LIKQLRDELRLEEARLVLLKKLRQSQ). A Glycyl lysine isopeptide (Lys-Gly) (interchain with G-Cter in SUMO2) cross-link involves residue Lys200. Ser209 bears the Phosphoserine mark. Residues 214-237 (SPAHVGQQGLSKLPSRPGAQGIEP) are disordered. Residue Lys282 forms a Glycyl lysine isopeptide (Lys-Gly) (interchain with G-Cter in SUMO2) linkage. A phosphoserine mark is found at Ser334, Ser339, and Ser341. The tract at residues 341–481 (SAMSDAANSQ…QEQEIEQRLQ (141 aa)) is CR2; histone tail-binding. Glycyl lysine isopeptide (Lys-Gly) (interchain with G-Cter in SUMO2) cross-links involve residues Lys354, Lys455, and Lys468. The segment at 415-468 (RVEPFVCAQCRTDFTPHWKQEKNGKILCEQCMTSNQKKALKAEHTNRLKNAFVK) adopts a GATA-type zinc-finger fold. A coiled-coil region spans residues 450-483 (QKKALKAEHTNRLKNAFVKALQQEQEIEQRLQQQ). Position 487 is a phosphoserine (Ser487). A Glycyl lysine isopeptide (Lys-Gly) (interchain with G-Cter in SUMO2) cross-link involves residue Lys499.

In terms of assembly, homooligomer. Component of the nucleosome remodeling and deacetylase (NuRD) repressor complex, composed of core proteins MTA1, MTA2, MTA3, RBBP4, RBBP7, HDAC1, HDAC2, MBD2, MBD3, and peripherally associated proteins CDK2AP1, CDK2AP2, GATAD2A, GATAD2B, CHD3, CHD4 and CHD5. The exact stoichiometry of the NuRD complex is unknown, and some subunits such as MBD2 and MBD3, GATAD2A and GATAD2B, and CHD3, CHD4 and CHD5 define mutually exclusive NuRD complexes. Interacts with MBD2; this is required for the enhancement of MBD2-mediated repression and for targeting to the chromatin. Interacts with MBD3. Component of the MeCP1 histone deacetylase complex. Interacts with histone tails, including that of histones H2A, H2B, H3 and H4. Interacts with ERCC6.

It is found in the nucleus speckle. The protein localises to the nucleus. The protein resides in the chromosome. Its function is as follows. Transcriptional repressor. Acts as a component of the histone deacetylase NuRD complex which participates in the remodeling of chromatin. Enhances MBD2-mediated repression. Efficient repression requires the presence of GATAD2A. Targets MBD3 to discrete loci in the nucleus. May play a role in synapse development. This Mus musculus (Mouse) protein is Transcriptional repressor p66-beta (Gatad2b).